Reading from the N-terminus, the 222-residue chain is Octanoyltransferase (222 aa).

The 176-residue stretch at 32–207 folds into the BPL/LPL catalytic domain; that stretch reads RDRPDVLMLL…AFARVFGVQC (176 aa). Substrate contacts are provided by residues 72 to 79, 139 to 141, and 152 to 154; these read RGGEVTYH, ALG, and GFA. Cys170 serves as the catalytic Acyl-thioester intermediate.

The protein belongs to the LipB family.

The protein localises to the cytoplasm. It carries out the reaction octanoyl-[ACP] + L-lysyl-[protein] = N(6)-octanoyl-L-lysyl-[protein] + holo-[ACP] + H(+). Its pathway is protein modification; protein lipoylation via endogenous pathway; protein N(6)-(lipoyl)lysine from octanoyl-[acyl-carrier-protein]: step 1/2. Catalyzes the transfer of endogenously produced octanoic acid from octanoyl-acyl-carrier-protein onto the lipoyl domains of lipoate-dependent enzymes. Lipoyl-ACP can also act as a substrate although octanoyl-ACP is likely to be the physiological substrate. In Gloeobacter violaceus (strain ATCC 29082 / PCC 7421), this protein is Octanoyltransferase.